We begin with the raw amino-acid sequence, 122 residues long: Large ribosomal subunit protein uL14 (122 aa).

Belongs to the universal ribosomal protein uL14 family. In terms of assembly, part of the 50S ribosomal subunit. Forms a cluster with proteins L3 and L19. In the 70S ribosome, L14 and L19 interact and together make contacts with the 16S rRNA in bridges B5 and B8.

Functionally, binds to 23S rRNA. Forms part of two intersubunit bridges in the 70S ribosome. The protein is Large ribosomal subunit protein uL14 of Symbiobacterium thermophilum (strain DSM 24528 / JCM 14929 / IAM 14863 / T).